A 308-amino-acid chain; its full sequence is tRNA dimethylallyltransferase (308 aa).

Residue 16–23 (GPTASGKT) participates in ATP binding. A substrate-binding site is contributed by 18 to 23 (TASGKT). Residues 41–44 (DSQQ) are interaction with substrate tRNA.

The protein belongs to the IPP transferase family. Monomer. It depends on Mg(2+) as a cofactor.

The catalysed reaction is adenosine(37) in tRNA + dimethylallyl diphosphate = N(6)-dimethylallyladenosine(37) in tRNA + diphosphate. Functionally, catalyzes the transfer of a dimethylallyl group onto the adenine at position 37 in tRNAs that read codons beginning with uridine, leading to the formation of N6-(dimethylallyl)adenosine (i(6)A). The polypeptide is tRNA dimethylallyltransferase (Myxococcus xanthus (strain DK1622)).